Reading from the N-terminus, the 155-residue chain is Small ribosomal subunit protein uS7 (155 aa).

The protein belongs to the universal ribosomal protein uS7 family. Part of the 30S ribosomal subunit. Contacts proteins S9 and S11.

Functionally, one of the primary rRNA binding proteins, it binds directly to 16S rRNA where it nucleates assembly of the head domain of the 30S subunit. Is located at the subunit interface close to the decoding center, probably blocks exit of the E-site tRNA. This is Small ribosomal subunit protein uS7 from Thermotoga neapolitana (strain ATCC 49049 / DSM 4359 / NBRC 107923 / NS-E).